Here is a 566-residue protein sequence, read N- to C-terminus: MSVPVRYSSAAAEYAAEVDCELESTLQQQQQLHLQQQYEQYQHYQYQREQDIAYYCQLQAARQQEQLMQQRTSMSSSVMPGLALPQDHQDHPAALLNGPHNNNIGLAMDAHSINAILVDDEQPSTSAQAAAAAAASAGGSAGAGSGSGLGGAIGGGKLANGINRNAEMPTDWMRIADEGRYGTPGAAGLEYQKYEQQQQLEDLAESEAGAVGGASNNNGESSSSLKKLEDQLHALTSDELYETLKEYDVLQDKFHTVLLLPKESRREVTAGGRDGSAYVLRCLKMWYELPSDVLFSAMSLVDRFLDRMAVKPKHMACMSVASFHLAIKQLDLKPIPAEDLVTISQCGCTAGDLERMAGVIANKLGVQMGHAPITSVSYLRIYYALFRNLAKEIGGDFFKFYQQLIKLEELENRLEILMCDVKTTVITPSTLALVLICLHLDFHIKESYTRGSPELKHVFEYILFLQQYMRIPDRVFTCGFSIVSGILSHYNGQNKAPYKQRLVWKLSSRTLRVLRPINRFSSDLPTIEEGIPNALDDGLRSRTESISSEEEEDWPTSPIIPIFEQC.

Residues 285–368 (MWYELPSDVL…VIANKLGVQM (84 aa)) form the Cyclin N-terminal domain.

The protein belongs to the cyclin family. Cyclin G subfamily. Interacts with corto. Interacts with the cyclin-dependent kinases Cdk2 and Cdk4. Interacts with Brca2 and Rad9. Interacts with polycomb protein Asx. Interacts with protein phosphatase 2A subunit wdb.

It localises to the chromosome. Cyclin with roles in multiple processes including transcription, meiotic recombination repair, cell cycle regulation, and promotion of normal growth and metabolism. Binds to the promoter region of the homeobox gene Abd-B and is involved in maintaining Abd-B expression in the pupal epithelium. Involved in the transcriptional repression of the homeotic genes Scr and Ubx. Plays a role in meiotic recombination repair of DNA double-strand breaks which ensures efficient translation of grk and promotes grk activity in the oocyte, leading to oocyte dorso-ventral axis formation following secretion of grk from the oocyte and its binding to Egfr in the directly overlying follicle cells. Negatively regulates the binding of serine/threonine-protein kinase Akt1 to the protein phosphatase 2A subunit wdb, promoting normal growth and metabolism. Required for the formation of bilateral symmetry. Negatively regulates cell cycle progression by preventing G1 to S transition and retarding S-phase progression. In Drosophila melanogaster (Fruit fly), this protein is Cyclin G.